A 366-amino-acid chain; its full sequence is Peptide chain release factor 2 (366 aa).

Glutamine 251 carries the post-translational modification N5-methylglutamine.

Belongs to the prokaryotic/mitochondrial release factor family. In terms of processing, methylated by PrmC. Methylation increases the termination efficiency of RF2.

The protein localises to the cytoplasm. Its function is as follows. Peptide chain release factor 2 directs the termination of translation in response to the peptide chain termination codons UGA and UAA. This chain is Peptide chain release factor 2 (prfB), found in Listeria innocua serovar 6a (strain ATCC BAA-680 / CLIP 11262).